We begin with the raw amino-acid sequence, 107 residues long: Small ribosomal subunit protein uS17 (107 aa).

This sequence belongs to the universal ribosomal protein uS17 family. Part of the 30S ribosomal subunit.

Functionally, one of the primary rRNA binding proteins, it binds specifically to the 5'-end of 16S ribosomal RNA. This Thermotoga maritima (strain ATCC 43589 / DSM 3109 / JCM 10099 / NBRC 100826 / MSB8) protein is Small ribosomal subunit protein uS17.